A 454-amino-acid polypeptide reads, in one-letter code: Bifunctional protein GlmU (454 aa).

The interval 1 to 225 (MNIVILAAGM…IWETLGVNSK (225 aa)) is pyrophosphorylase. UDP-N-acetyl-alpha-D-glucosamine contacts are provided by residues 6–9 (LAAG), K20, Q71, 76–77 (GT), 98–100 (YGD), G135, E150, N165, and N223. D100 lines the Mg(2+) pocket. N223 contributes to the Mg(2+) binding site. Residues 226–246 (LQLAEVERIHQGNQARRLLEA) form a linker region. The segment at 247–454 (GVTLLDPARI…WQRPVKQPKK (208 aa)) is N-acetyltransferase. R329 and K347 together coordinate UDP-N-acetyl-alpha-D-glucosamine. Catalysis depends on H359, which acts as the Proton acceptor. UDP-N-acetyl-alpha-D-glucosamine-binding residues include Y362 and N373. Acetyl-CoA contacts are provided by residues A376, 382–383 (NY), S401, A419, and R436.

This sequence in the N-terminal section; belongs to the N-acetylglucosamine-1-phosphate uridyltransferase family. The protein in the C-terminal section; belongs to the transferase hexapeptide repeat family. As to quaternary structure, homotrimer. The cofactor is Mg(2+).

It is found in the cytoplasm. It carries out the reaction alpha-D-glucosamine 1-phosphate + acetyl-CoA = N-acetyl-alpha-D-glucosamine 1-phosphate + CoA + H(+). The catalysed reaction is N-acetyl-alpha-D-glucosamine 1-phosphate + UTP + H(+) = UDP-N-acetyl-alpha-D-glucosamine + diphosphate. The protein operates within nucleotide-sugar biosynthesis; UDP-N-acetyl-alpha-D-glucosamine biosynthesis; N-acetyl-alpha-D-glucosamine 1-phosphate from alpha-D-glucosamine 6-phosphate (route II): step 2/2. It functions in the pathway nucleotide-sugar biosynthesis; UDP-N-acetyl-alpha-D-glucosamine biosynthesis; UDP-N-acetyl-alpha-D-glucosamine from N-acetyl-alpha-D-glucosamine 1-phosphate: step 1/1. It participates in bacterial outer membrane biogenesis; LPS lipid A biosynthesis. Functionally, catalyzes the last two sequential reactions in the de novo biosynthetic pathway for UDP-N-acetylglucosamine (UDP-GlcNAc). The C-terminal domain catalyzes the transfer of acetyl group from acetyl coenzyme A to glucosamine-1-phosphate (GlcN-1-P) to produce N-acetylglucosamine-1-phosphate (GlcNAc-1-P), which is converted into UDP-GlcNAc by the transfer of uridine 5-monophosphate (from uridine 5-triphosphate), a reaction catalyzed by the N-terminal domain. This is Bifunctional protein GlmU from Cupriavidus necator (strain ATCC 17699 / DSM 428 / KCTC 22496 / NCIMB 10442 / H16 / Stanier 337) (Ralstonia eutropha).